The sequence spans 406 residues: Subtilisin-like protease CPC735_023170 (406 aa).

The first 20 residues, 1–20 (MRLFQSTCVLVGTVLPLFTA), serve as a signal peptide directing secretion. A propeptide spanning residues 21-118 (FPISSPREIE…VEPDSMAYVT (98 aa)) is cleaved from the precursor. Residues 35 to 115 (KYIITFKKGI…VESVEPDSMA (81 aa)) enclose the Inhibitor I9 domain. N-linked (GlcNAc...) asparagine glycosylation occurs at Asn125. A Peptidase S8 domain is found at 127–406 (TYGPRRISHR…NKLAYNGSGK (280 aa)). Active-site charge relay system residues include Asp161 and His192. A glycan (N-linked (GlcNAc...) asparagine) is linked at Asn239. Residues 283 to 309 (NDGRDAGRNSPGSAPESITVGSINSRR) form a disordered region. N-linked (GlcNAc...) asparagine glycosylation occurs at Asn346. Residue Ser351 is the Charge relay system of the active site. N-linked (GlcNAc...) asparagine glycosylation is present at Asn402.

The protein belongs to the peptidase S8 family.

It is found in the secreted. Secreted subtilisin-like serine protease with keratinolytic activity that contributes to pathogenicity. The chain is Subtilisin-like protease CPC735_023170 from Coccidioides posadasii (strain C735) (Valley fever fungus).